The chain runs to 126 residues: Small ribosomal subunit protein bS6 (126 aa).

The interval 107-126 is disordered; the sequence is RDRERGERSERPRDDFAPAA.

Belongs to the bacterial ribosomal protein bS6 family.

In terms of biological role, binds together with bS18 to 16S ribosomal RNA. The chain is Small ribosomal subunit protein bS6 from Caulobacter sp. (strain K31).